The sequence spans 427 residues: Gamma-glutamyl phosphate reductase (427 aa).

Belongs to the gamma-glutamyl phosphate reductase family.

It is found in the cytoplasm. The enzyme catalyses L-glutamate 5-semialdehyde + phosphate + NADP(+) = L-glutamyl 5-phosphate + NADPH + H(+). Its pathway is amino-acid biosynthesis; L-proline biosynthesis; L-glutamate 5-semialdehyde from L-glutamate: step 2/2. Catalyzes the NADPH-dependent reduction of L-glutamate 5-phosphate into L-glutamate 5-semialdehyde and phosphate. The product spontaneously undergoes cyclization to form 1-pyrroline-5-carboxylate. This Rhizobium meliloti (strain 1021) (Ensifer meliloti) protein is Gamma-glutamyl phosphate reductase.